A 361-amino-acid polypeptide reads, in one-letter code: 3-dehydroquinate synthase (361 aa).

NAD(+) is bound by residues asparagine 41, 70–75 (DGEQYK), 104–108 (GVIGD), 128–129 (TT), lysine 141, lysine 150, 150–151 (KN), and 168–171 (CLTT). Zn(2+)-binding residues include glutamate 183, histidine 246, and histidine 263.

This sequence belongs to the sugar phosphate cyclases superfamily. Dehydroquinate synthase family. It depends on NAD(+) as a cofactor. Co(2+) serves as cofactor. Requires Zn(2+) as cofactor.

It localises to the cytoplasm. The enzyme catalyses 7-phospho-2-dehydro-3-deoxy-D-arabino-heptonate = 3-dehydroquinate + phosphate. The protein operates within metabolic intermediate biosynthesis; chorismate biosynthesis; chorismate from D-erythrose 4-phosphate and phosphoenolpyruvate: step 2/7. In terms of biological role, catalyzes the conversion of 3-deoxy-D-arabino-heptulosonate 7-phosphate (DAHP) to dehydroquinate (DHQ). In Vibrio cholerae serotype O1 (strain ATCC 39315 / El Tor Inaba N16961), this protein is 3-dehydroquinate synthase.